Consider the following 368-residue polypeptide: Somatostatin receptor type 5 (368 aa).

At 1-45 (MEPLFPASPLTTWNTSSVVPSGSGDENGTLAGLGPSPGARAVVVP) the chain is on the extracellular side. 2 N-linked (GlcNAc...) asparagine glycosylation sites follow: asparagine 14 and asparagine 27. The chain crosses the membrane as a helical span at residues 46–66 (VLYLLVCAVGLGGNTLVIYVV). Residues 67–77 (LRHAKMKTVTN) lie on the Cytoplasmic side of the membrane. The chain crosses the membrane as a helical span at residues 78-98 (IYILNLAVADVLLMLGLPFVA). At 99–115 (TQNAISYWPFGPVLCRL) the chain is on the extracellular side. The cysteines at positions 113 and 188 are disulfide-linked. Residues 116 to 136 (VMTLDGINQFTSIFCLTVMSV) form a helical membrane-spanning segment. The Cytoplasmic segment spans residues 137-158 (DRYLAVVHPIRSARWRRPRVAK). The helical transmembrane segment at 159–179 (LASAAVWAFSLVMSLPLVVFA) threads the bilayer. Residues 180 to 207 (DIQEGWNTCNLSWPEPVGLWGAVFIIYT) are Extracellular-facing. The N-linked (GlcNAc...) asparagine glycan is linked to asparagine 189. The helical transmembrane segment at 208 to 228 (SVLGFFGPLLVICLCYLLIVV) threads the bilayer. Residues 229–251 (KLKASGVRVGSTRRRSERKVTRM) lie on the Cytoplasmic side of the membrane. A helical transmembrane segment spans residues 252 to 272 (VVVVVLVFAGCWLPFFIVNIV). The Extracellular portion of the chain corresponds to 273–286 (NLAFALPEEPASAG). A helical transmembrane segment spans residues 287–309 (AYFFVVVLSYANSCANPLLYGFL). Residues 310-368 (SDNFRQSFRKVLCLRKGYGAGAEDADATEPQPGPSSRLQEAMMPVRSCKANGLMQTSKL) lie on the Cytoplasmic side of the membrane. Residue cysteine 322 is the site of S-palmitoyl cysteine; by ZDHHC5 attachment.

Belongs to the G-protein coupled receptor 1 family. As to quaternary structure, heterodimer with SSTR2. Heterodimerization with SSTR2 increases cell growth inhibition activity of SSTR2. Post-translationally, palmitoylated by ZDHHC5, but not ZDHHC3, nor ZDHHC8. Palmitoylation creates an additional intracellular loop which is thought to be important for efficient coupling to G-proteins and may target the protein to lipid rafts.

The protein localises to the cell membrane. Functionally, receptor for somatostatin 28 and to a lesser extent for somatostatin-14. The activity of this receptor is mediated by G proteins which inhibit adenylyl cyclase. Increases cell growth inhibition activity of SSTR2 following heterodimerization. This is Somatostatin receptor type 5 (SSTR5) from Bos taurus (Bovine).